A 560-amino-acid polypeptide reads, in one-letter code: uncharacterized protein (560 aa).

Residues 1–17 (MEPKRKSGSLAKHDLPQ) are Cytoplasmic-facing. Residues 18 to 38 (FYLLIMLYLAQGIPVGLAFGT) form a helical membrane-spanning segment. At 39–54 (VPFLLKSLAKETSFTS) the chain is on the extracellular side. Residues 55-75 (LGIFSMATYPYSLKIIWSPIV) form a helical membrane-spanning segment. The Cytoplasmic portion of the chain corresponds to 76–88 (DSLYNKRIGRRRS). Residues 89-109 (WIIPVQFVSGFVLWALGWCIS) form a helical membrane-spanning segment. The Extracellular segment spans residues 110-139 (QGIIFDGVDDAFHNRGNGTLHSVSIKNLTW). Residues 140–160 (WFGLLVFLCATQDIAVDGWAL) form a helical membrane-spanning segment. At 161 to 172 (TILSKESLSYAS) the chain is on the cytoplasmic side. The chain crosses the membrane as a helical span at residues 173 to 193 (TAQTIGLNIGYFMSFTIFLSL). Residues 194 to 214 (NSSDFANKYFRNIPLDHGFIS) are Extracellular-facing. A helical transmembrane segment spans residues 215–235 (LGGYMKFSGMLYIVITIYIIF). Topologically, residues 236–329 (CTKEKPYVEY…KLLEQGFKRE (94 aa)) are cytoplasmic. The helical transmembrane segment at 330-350 (DLAVTVLIDLPFEIIFGYYVV) threads the bilayer. Residues 351–374 (KWSSDKDPMIRDNRRLRNSTGTNK) lie on the Extracellular side of the membrane. A helical transmembrane segment spans residues 375-395 (VIKFLVGDAGVLTPWLWGFLG). Residues 396–421 (RLAAAVLGSYVVKQFPKDGEISTGYF) lie on the Cytoplasmic side of the membrane. The helical transmembrane segment at 422 to 442 (CLVIFQHLLGSFMNTVQFIGI) threads the bilayer. At 443–521 (SAFHTRVADP…LNGTVTILRD (79 aa)) the chain is on the extracellular side. The helical transmembrane segment at 522–542 (GYYITNLICIVVGLFLYFGYL) threads the bilayer. Residues 543 to 560 (KRKILHLQSLPISSWRCT) are Cytoplasmic-facing.

Its subcellular location is the membrane. This is an uncharacterized protein from Saccharomyces cerevisiae (strain ATCC 204508 / S288c) (Baker's yeast).